The primary structure comprises 199 residues: Neurotrophic factor BDNF precursor form (199 aa).

The tract at residues 1-23 (GQGSLAYPGLRTQGNLETLSGPN) is disordered. The propeptide occupies 1 to 100 (GQGSLAYPGL…AANMSMRVRR (100 aa)). Positions 12 to 23 (TQGNLETLSGPN) are enriched in polar residues. Asn93 is a glycosylation site (N-linked (GlcNAc...) asparagine). A disulfide bridge links Cys113 with Cys180.

This sequence belongs to the NGF-beta family.

It is found in the secreted. Its function is as follows. Promotes the survival of neuronal populations that are all located either in the central nervous system or directly connected to it. The chain is Neurotrophic factor BDNF precursor form (BDNF) from Eunectes notaeus (Yellow anaconda).